A 260-amino-acid polypeptide reads, in one-letter code: 3-methyl-2-oxobutanoate hydroxymethyltransferase (260 aa).

Mg(2+)-binding residues include aspartate 44 and aspartate 83. Residues 44–45, aspartate 83, and lysine 113 contribute to the 3-methyl-2-oxobutanoate site; that span reads DS. Position 115 (glutamate 115) interacts with Mg(2+). Residue glutamate 183 is the Proton acceptor of the active site.

This sequence belongs to the PanB family. As to quaternary structure, homodecamer; pentamer of dimers. The cofactor is Mg(2+).

It is found in the cytoplasm. The catalysed reaction is 3-methyl-2-oxobutanoate + (6R)-5,10-methylene-5,6,7,8-tetrahydrofolate + H2O = 2-dehydropantoate + (6S)-5,6,7,8-tetrahydrofolate. It participates in cofactor biosynthesis; (R)-pantothenate biosynthesis; (R)-pantoate from 3-methyl-2-oxobutanoate: step 1/2. Its function is as follows. Catalyzes the reversible reaction in which hydroxymethyl group from 5,10-methylenetetrahydrofolate is transferred onto alpha-ketoisovalerate to form ketopantoate. The polypeptide is 3-methyl-2-oxobutanoate hydroxymethyltransferase (Gloeobacter violaceus (strain ATCC 29082 / PCC 7421)).